A 294-amino-acid chain; its full sequence is Elongation factor Ts (294 aa).

Residues 79–82 (TDFV) form an involved in Mg(2+) ion dislocation from EF-Tu region.

The protein belongs to the EF-Ts family.

The protein localises to the cytoplasm. In terms of biological role, associates with the EF-Tu.GDP complex and induces the exchange of GDP to GTP. It remains bound to the aminoacyl-tRNA.EF-Tu.GTP complex up to the GTP hydrolysis stage on the ribosome. The sequence is that of Elongation factor Ts from Geobacillus sp. (strain WCH70).